The primary structure comprises 172 residues: Shikimate kinase (172 aa).

11-16 is a binding site for ATP; the sequence is GAGKST. Ser-15 lines the Mg(2+) pocket. Residues Asp-33, Arg-57, and Gly-79 each coordinate substrate. Arg-117 provides a ligand contact to ATP. A substrate-binding site is contributed by Arg-136. An ATP-binding site is contributed by Arg-153.

This sequence belongs to the shikimate kinase family. Monomer. Mg(2+) is required as a cofactor.

It localises to the cytoplasm. The catalysed reaction is shikimate + ATP = 3-phosphoshikimate + ADP + H(+). It functions in the pathway metabolic intermediate biosynthesis; chorismate biosynthesis; chorismate from D-erythrose 4-phosphate and phosphoenolpyruvate: step 5/7. Functionally, catalyzes the specific phosphorylation of the 3-hydroxyl group of shikimic acid using ATP as a cosubstrate. The chain is Shikimate kinase from Pseudomonas syringae pv. syringae (strain B728a).